A 388-amino-acid polypeptide reads, in one-letter code: Lipoyl synthase, mitochondrial (388 aa).

The transit peptide at 1–18 (MRLTTVQRRFLVSTKAKV) directs the protein to the mitochondrion. The segment covering 22–39 (SISSTANTGSASAGAPNG) has biased composition (low complexity). Residues 22–43 (SISSTANTGSASAGAPNGQTRR) form a disordered region. Cys-120, Cys-125, Cys-131, Cys-151, Cys-155, Cys-158, and Ser-366 together coordinate [4Fe-4S] cluster. One can recognise a Radical SAM core domain in the interval 134–355 (GKDKSKATAT…KDKAKEMGFL (222 aa)).

It belongs to the radical SAM superfamily. Lipoyl synthase family. [4Fe-4S] cluster is required as a cofactor.

The protein resides in the mitochondrion. It carries out the reaction [[Fe-S] cluster scaffold protein carrying a second [4Fe-4S](2+) cluster] + N(6)-octanoyl-L-lysyl-[protein] + 2 oxidized [2Fe-2S]-[ferredoxin] + 2 S-adenosyl-L-methionine + 4 H(+) = [[Fe-S] cluster scaffold protein] + N(6)-[(R)-dihydrolipoyl]-L-lysyl-[protein] + 4 Fe(3+) + 2 hydrogen sulfide + 2 5'-deoxyadenosine + 2 L-methionine + 2 reduced [2Fe-2S]-[ferredoxin]. Its pathway is protein modification; protein lipoylation via endogenous pathway; protein N(6)-(lipoyl)lysine from octanoyl-[acyl-carrier-protein]: step 2/2. Functionally, catalyzes the radical-mediated insertion of two sulfur atoms into the C-6 and C-8 positions of the octanoyl moiety bound to the lipoyl domains of lipoate-dependent enzymes, thereby converting the octanoylated domains into lipoylated derivatives. The chain is Lipoyl synthase, mitochondrial from Candida glabrata (strain ATCC 2001 / BCRC 20586 / JCM 3761 / NBRC 0622 / NRRL Y-65 / CBS 138) (Yeast).